The following is a 415-amino-acid chain: D-galactonate dehydratase family member RspA (415 aa).

Residues N48 and H133 each contribute to the substrate site. The Proton donor/acceptor role is filled by Y170. Position 223 (D223) interacts with Mg(2+). Residue H225 is the Proton donor/acceptor of the active site. Positions 249, 250, and 275 each coordinate Mg(2+). Residues E275, R296, H325, D329, and E352 each contribute to the substrate site.

This sequence belongs to the mandelate racemase/muconate lactonizing enzyme family. GalD subfamily. Mg(2+) serves as cofactor.

It catalyses the reaction D-mannonate = 2-dehydro-3-deoxy-D-gluconate + H2O. Its function is as follows. Has low D-mannonate dehydratase activity (in vitro), suggesting that this is not a physiological substrate and that it has no significant role in D-mannonate degradation in vivo. Has no detectable activity with a panel of 70 other acid sugars (in vitro). The protein is D-galactonate dehydratase family member RspA (rspA) of Escherichia coli O6:H1 (strain CFT073 / ATCC 700928 / UPEC).